The chain runs to 431 residues: E3 ubiquitin-protein ligase marc-3 (431 aa).

The RING-CH-type zinc finger occupies 5-74 (NASLGPAVCR…EICKFAFKIK (70 aa)). Cys-13, Cys-16, Cys-38, Cys-40, His-48, Cys-51, Cys-64, and Cys-67 together coordinate Zn(2+). 2 helical membrane-spanning segments follow: residues 98 to 118 (PFIDFAFVLLILPFAFFGVFM) and 157 to 177 (LFLFVALLLFSAFITLVVSAL). Disordered stretches follow at residues 267-289 (TSPDSNNTHHHDESRNEIPFGRR) and 327-349 (SRATSTRRESGISPESSSRRDMR). Residues 273-282 (NTHHHDESRN) show a composition bias toward basic and acidic residues.

It is found in the cell membrane. The protein localises to the endosome membrane. The enzyme catalyses S-ubiquitinyl-[E2 ubiquitin-conjugating enzyme]-L-cysteine + [acceptor protein]-L-lysine = [E2 ubiquitin-conjugating enzyme]-L-cysteine + N(6)-ubiquitinyl-[acceptor protein]-L-lysine.. The protein operates within protein modification; protein ubiquitination. E3 ubiquitin-protein ligase which positively regulates the fast polyspermy block during fertilization, preventing entry of more than one sperm into the oocyte. After fertilization, required in the zygote for the selective degradation of a subset of maternal membrane proteins including cav-1, chs-1 and rme-2, probably by mediating their K63-linked polyubiquitination. This is E3 ubiquitin-protein ligase marc-3 from Caenorhabditis elegans.